A 57-amino-acid polypeptide reads, in one-letter code: Large ribosomal subunit protein bL32 (57 aa).

The disordered stretch occupies residues 1–21 (MAVPKRRTSKKVKNQRRTHKK).

This sequence belongs to the bacterial ribosomal protein bL32 family.

This Oceanobacillus iheyensis (strain DSM 14371 / CIP 107618 / JCM 11309 / KCTC 3954 / HTE831) protein is Large ribosomal subunit protein bL32.